Here is a 196-residue protein sequence, read N- to C-terminus: Nucleoid occlusion factor SlmA (196 aa).

Residues 7–68 (TNRREEILQA…GLIEFIEEAL (62 aa)) enclose the HTH tetR-type domain. The H-T-H motif DNA-binding region spans 31 to 50 (TTAKLAKQVGVSEAALYRHF). Residues 110–142 (HALMFENERLRDRINQLFERIETQLRQILRERK) adopt a coiled-coil conformation.

It belongs to the nucleoid occlusion factor SlmA family. In terms of assembly, homodimer. Interacts with FtsZ.

Its subcellular location is the cytoplasm. The protein resides in the nucleoid. In terms of biological role, required for nucleoid occlusion (NO) phenomenon, which prevents Z-ring formation and cell division over the nucleoid. Acts as a DNA-associated cell division inhibitor that binds simultaneously chromosomal DNA and FtsZ, and disrupts the assembly of FtsZ polymers. SlmA-DNA-binding sequences (SBS) are dispersed on non-Ter regions of the chromosome, preventing FtsZ polymerization at these regions. The chain is Nucleoid occlusion factor SlmA from Vibrio campbellii (strain ATCC BAA-1116).